A 487-amino-acid polypeptide reads, in one-letter code: 2-aminomuconic semialdehyde dehydrogenase (487 aa).

231-236 (GSTATA) lines the NAD(+) pocket. Glu-253 acts as the Proton acceptor in catalysis. The active-site Nucleophile is Cys-287.

It belongs to the aldehyde dehydrogenase family.

Its subcellular location is the cytoplasm. It catalyses the reaction 2-aminomuconate 6-semialdehyde + NAD(+) + H2O = (2Z,4E)-2-aminomuconate + NADH + 2 H(+). It functions in the pathway amino-acid degradation; L-kynurenine degradation. In terms of biological role, catalyzes the NAD-dependent oxidation of 2-aminomuconic semialdehyde of the kynurenine metabolic pathway in L-tryptophan degradation. The polypeptide is 2-aminomuconic semialdehyde dehydrogenase (aldh8a1) (Danio rerio (Zebrafish)).